The following is a 482-amino-acid chain: Glutamate--tRNA ligase (482 aa).

A 'HIGH' region motif is present at residues 9–19; it reads PSPTGYLHIGG. The short motif at 252–256 is the 'KMSKS' region element; it reads KLSKR. Residue K255 participates in ATP binding.

The protein belongs to the class-I aminoacyl-tRNA synthetase family. Glutamate--tRNA ligase type 1 subfamily. In terms of assembly, monomer.

The protein localises to the cytoplasm. It catalyses the reaction tRNA(Glu) + L-glutamate + ATP = L-glutamyl-tRNA(Glu) + AMP + diphosphate. Catalyzes the attachment of glutamate to tRNA(Glu) in a two-step reaction: glutamate is first activated by ATP to form Glu-AMP and then transferred to the acceptor end of tRNA(Glu). This Ureaplasma parvum serovar 3 (strain ATCC 27815 / 27 / NCTC 11736) protein is Glutamate--tRNA ligase.